Here is a 464-residue protein sequence, read N- to C-terminus: 3-isopropylmalate dehydratase large subunit (464 aa).

Residues Cys-337, Cys-397, and Cys-400 each coordinate [4Fe-4S] cluster.

This sequence belongs to the aconitase/IPM isomerase family. LeuC type 1 subfamily. In terms of assembly, heterodimer of LeuC and LeuD. [4Fe-4S] cluster serves as cofactor.

The catalysed reaction is (2R,3S)-3-isopropylmalate = (2S)-2-isopropylmalate. It participates in amino-acid biosynthesis; L-leucine biosynthesis; L-leucine from 3-methyl-2-oxobutanoate: step 2/4. Functionally, catalyzes the isomerization between 2-isopropylmalate and 3-isopropylmalate, via the formation of 2-isopropylmaleate. The polypeptide is 3-isopropylmalate dehydratase large subunit (Bacillus cereus (strain B4264)).